The chain runs to 470 residues: Glutamate--tRNA ligase (470 aa).

Residues 12 to 22 (PSPTGIFHVGG) carry the 'HIGH' region motif. Positions 103, 105, 125, and 127 each coordinate Zn(2+). Residues 236 to 240 (KLSKR) carry the 'KMSKS' region motif. Position 239 (K239) interacts with ATP.

Belongs to the class-I aminoacyl-tRNA synthetase family. Glutamate--tRNA ligase type 1 subfamily. Monomer. Zn(2+) is required as a cofactor.

The protein resides in the cytoplasm. It catalyses the reaction tRNA(Glu) + L-glutamate + ATP = L-glutamyl-tRNA(Glu) + AMP + diphosphate. Its function is as follows. Catalyzes the attachment of glutamate to tRNA(Glu) in a two-step reaction: glutamate is first activated by ATP to form Glu-AMP and then transferred to the acceptor end of tRNA(Glu). The sequence is that of Glutamate--tRNA ligase from Frankia alni (strain DSM 45986 / CECT 9034 / ACN14a).